The primary structure comprises 284 residues: Acetyl-coenzyme A carboxylase carboxyl transferase subunit beta (284 aa).

The 254-residue stretch at 31–284 (FWTYCKGCDS…LYQILAMHKK (254 aa)) folds into the CoA carboxyltransferase N-terminal domain. Positions 35, 38, 54, and 57 each coordinate Zn(2+). The C4-type zinc-finger motif lies at 35 to 57 (CKGCDSHVFRKDIEENSFVCPKC).

Belongs to the AccD/PCCB family. In terms of assembly, acetyl-CoA carboxylase is a heterohexamer composed of biotin carboxyl carrier protein (AccB), biotin carboxylase (AccC) and two subunits each of ACCase subunit alpha (AccA) and ACCase subunit beta (AccD). Zn(2+) serves as cofactor.

The protein localises to the cytoplasm. The enzyme catalyses N(6)-carboxybiotinyl-L-lysyl-[protein] + acetyl-CoA = N(6)-biotinyl-L-lysyl-[protein] + malonyl-CoA. It functions in the pathway lipid metabolism; malonyl-CoA biosynthesis; malonyl-CoA from acetyl-CoA: step 1/1. Its function is as follows. Component of the acetyl coenzyme A carboxylase (ACC) complex. Biotin carboxylase (BC) catalyzes the carboxylation of biotin on its carrier protein (BCCP) and then the CO(2) group is transferred by the transcarboxylase to acetyl-CoA to form malonyl-CoA. This is Acetyl-coenzyme A carboxylase carboxyl transferase subunit beta from Clostridioides difficile (strain 630) (Peptoclostridium difficile).